We begin with the raw amino-acid sequence, 29 residues long: Glucagon (29 aa).

Ser2 is subject to Phosphoserine.

It belongs to the glucagon family.

It localises to the secreted. Glucagon plays a key role in glucose metabolism and homeostasis. Regulates blood glucose by increasing gluconeogenesis and decreasing glycolysis. The chain is Glucagon (GCG) from Chinchilla chinchilla (Short-tailed chinchilla).